A 900-amino-acid chain; its full sequence is Seizure protein 6 homolog (900 aa).

The N-terminal stretch at 1 to 20 (MMPLAGIAWNLMLLFSAVQG) is a signal peptide. The interval 111–130 (LIPPSPAPTGGPGPSPEAEE) is disordered. The segment covering 113-125 (PPSPAPTGGPGPS) has biased composition (pro residues). Cys-151 and Cys-178 are joined by a disulfide. One can recognise a CUB 1 domain in the interval 151–259 (CNNNISESEG…GAFRLRYQAF (109 aa)). Residues Asn-154, Asn-198, and Asn-220 are each glycosylated (N-linked (GlcNAc...) asparagine). One can recognise a Sushi 1 domain in the interval 261 to 320 (LSCVFPPRPENGEVTVTDLHPGGAANFRCSAGFTLKGGESLVCLNISRPEWSGKPPVCAA). 6 disulfide bridges follow: Cys-263–Cys-303, Cys-289–Cys-318, Cys-322–Cys-353, Cys-441–Cys-483, Cys-468–Cys-498, and Cys-502–Cys-528. Residues Asn-305, Asn-328, Asn-350, Asn-450, and Asn-492 are each glycosylated (N-linked (GlcNAc...) asparagine). The 115-residue stretch at 322-436 (CGGVIRNATV…LLLSLRYEVF (115 aa)) folds into the CUB 2 domain. The Sushi 2 domain maps to 439–500 (SRCYEPFLAH…WNESEPVCKA (62 aa)). The CUB 3 domain maps to 502–613 (CGGEISEPAG…QGFIIHFKEV (112 aa)). An N-linked (GlcNAc...) asparagine glycan is attached at Asn-616. Sushi domains lie at 617–676 (DTCP…TCEK), 678–741 (LNCA…KCVL), and 744–805 (EPCL…LCKV). 6 cysteine pairs are disulfide-bonded: Cys-619–Cys-661, Cys-647–Cys-674, Cys-680–Cys-722, Cys-708–Cys-739, Cys-746–Cys-788, and Cys-774–Cys-803. A helical transmembrane segment spans residues 833 to 853 (IALAIFLPIILVILLIGGIYI).

It belongs to the SEZ6 family.

The protein localises to the cell membrane. Functionally, may play a role in cell-cell recognition and in neuronal membrane signaling. In Xenopus laevis (African clawed frog), this protein is Seizure protein 6 homolog (sez6).